We begin with the raw amino-acid sequence, 216 residues long: Snake venom metalloproteinase HT-1 (216 aa).

The 87-residue stretch at 8–94 (PPVCGNELLE…DCPMDDFHRN (87 aa)) folds into the Disintegrin domain. Ca(2+)-binding residues include valine 10, asparagine 13, leucine 15, glutamate 17, glutamate 20, and aspartate 23. Cystine bridges form between cysteine 11–cysteine 40, cysteine 22–cysteine 35, cysteine 24–cysteine 30, cysteine 34–cysteine 57, cysteine 48–cysteine 54, cysteine 53–cysteine 79, cysteine 66–cysteine 86, cysteine 73–cysteine 105, cysteine 98–cysteine 110, cysteine 117–cysteine 167, cysteine 132–cysteine 178, cysteine 145–cysteine 155, cysteine 162–cysteine 204, and cysteine 198–cysteine 209. The D/ECD-tripeptide signature appears at 72-74 (ECD). Residue asparagine 175 is glycosylated (N-linked (GlcNAc...) asparagine).

The protein belongs to the venom metalloproteinase (M12B) family. P-III subfamily. P-IIIa sub-subfamily. In terms of assembly, monomer. Requires Zn(2+) as cofactor. As to expression, expressed by the venom gland.

It is found in the secreted. Functionally, zinc protease from snake venom that induces hemorrhage. This is Snake venom metalloproteinase HT-1 from Crotalus ruber ruber (Red diamond rattlesnake).